Here is a 302-residue protein sequence, read N- to C-terminus: Ribose-5-phosphate isomerase (302 aa).

Belongs to the ribose 5-phosphate isomerase family.

The protein resides in the cytoplasm. The catalysed reaction is aldehydo-D-ribose 5-phosphate = D-ribulose 5-phosphate. Its pathway is carbohydrate degradation; pentose phosphate pathway; D-ribose 5-phosphate from D-ribulose 5-phosphate (non-oxidative stage): step 1/1. The polypeptide is Ribose-5-phosphate isomerase (RKI1) (Cryptococcus neoformans var. neoformans serotype D (strain B-3501A) (Filobasidiella neoformans)).